The sequence spans 139 residues: ATP synthase epsilon chain (139 aa).

This sequence belongs to the ATPase epsilon chain family. In terms of assembly, F-type ATPases have 2 components, CF(1) - the catalytic core - and CF(0) - the membrane proton channel. CF(1) has five subunits: alpha(3), beta(3), gamma(1), delta(1), epsilon(1). CF(0) has three main subunits: a, b and c.

It localises to the cell inner membrane. Produces ATP from ADP in the presence of a proton gradient across the membrane. In Pseudomonas syringae pv. tomato (strain ATCC BAA-871 / DC3000), this protein is ATP synthase epsilon chain.